The primary structure comprises 303 residues: Tyrosine recombinase XerC (303 aa).

A Core-binding (CB) domain is found at 6 to 92 (ASLAPQVEAF…ALRSFLNWLV (87 aa)). One can recognise a Tyr recombinase domain in the interval 113 to 292 (HLPKNIDVDE…DFQHLATVYD (180 aa)). Catalysis depends on residues Arg-152, Lys-176, His-244, Arg-247, and His-270. Tyr-279 functions as the O-(3'-phospho-DNA)-tyrosine intermediate in the catalytic mechanism.

Belongs to the 'phage' integrase family. XerC subfamily. As to quaternary structure, forms a cyclic heterotetrameric complex composed of two molecules of XerC and two molecules of XerD, in which XerC interacts with XerD via its C-terminal region, XerD interacts with XerC via its C-terminal region and so on.

It is found in the cytoplasm. Its activity is regulated as follows. FtsK may regulate the catalytic switch between XerC and XerD in the heterotetrameric complex during the two steps of the recombination process. In terms of biological role, site-specific tyrosine recombinase, which acts by catalyzing the cutting and rejoining of the recombining DNA molecules. Binds cooperatively to specific DNA consensus sequences that are separated from XerD binding sites by a short central region, forming the heterotetrameric XerC-XerD complex that recombines DNA substrates. The complex is essential to convert dimers of the bacterial chromosome into monomers to permit their segregation at cell division. It also contributes to the segregational stability of plasmids. In the complex XerC specifically exchanges the top DNA strands. The protein is Tyrosine recombinase XerC of Yersinia pestis.